The chain runs to 1091 residues: Integrin alpha-6 (1091 aa).

Positions 1 to 23 (MAVAGQLCLLYLSAGLLARLGTA) are cleaved as a signal peptide. Residues 24–1011 (FNLDTREDNV…FPSKTVAQYS (988 aa)) lie on the Extracellular side of the membrane. FG-GAP repeat units follow at residues 30–95 (EDNV…GPCT), 101–166 (NDAD…IEDD), 176–229 (DGRL…FFDM), 244–300 (DHDE…KSAH), 301–363 (LLPE…KWSN), 364–419 (VKPI…GIIT), and 420–479 (KPTQ…VTPN). An N-linked (GlcNAc...) asparagine glycan is attached at Asn-78. Intrachain disulfides connect Cys-86/Cys-94, Cys-131/Cys-154, and Cys-175/Cys-188. Asn-223 and Asn-284 each carry an N-linked (GlcNAc...) asparagine glycan. Residues Asp-324, Asn-326, Asp-328, and Asp-332 each contribute to the Ca(2+) site. Asn-370 is a glycosylation site (N-linked (GlcNAc...) asparagine). Ca(2+)-binding residues include Asp-386, Asn-388, Asp-390, Tyr-392, Asp-394, Asp-441, Asp-443, Asn-445, Tyr-447, and Asp-449. Cystine bridges form between Cys-489/Cys-496, Cys-502/Cys-562, Cys-626/Cys-632, and Cys-726/Cys-737. 3 N-linked (GlcNAc...) asparagine glycosylation sites follow: Asn-731, Asn-746, and Asn-927. Disulfide bonds link Cys-881/Cys-928 and Cys-934/Cys-939. Residue Asn-958 is glycosylated (N-linked (GlcNAc...) asparagine). The helical transmembrane segment at 1012–1037 (GVAWWIILLAVLAGILMLALLVFLLW) threads the bilayer. At 1038–1091 (KCGFFKRSRYDDSIPRYHAVRIRKEEREIKDEKHMDNLEKKQWITKWNENESYS) the chain is on the cytoplasmic side. Residue Cys-1039 is the site of S-palmitoyl cysteine; by DHHC3 attachment. Residues 1040-1044 (GFFKR) carry the GFFKR motif motif. Position 1064 is a phosphoserine (Arg-1064).

The protein belongs to the integrin alpha chain family. In terms of assembly, heterodimer of an alpha and a beta subunit. The alpha subunit is composed of a heavy and a light chain linked by a disulfide bond. Alpha-6 associates with either beta-1 (ITGB1) or beta-4 (ITGB4) to form ITGA6:ITGB1 and ITGA6:ITGB4, respectively. ITGA6:ITGB1 is found in a complex with CD9; interaction takes place in oocytes and is involved in sperm-egg fusion. ITGA6:ITGB4 is found in a ternary complex with NRG1 and ERBB3. ITGA6:ITGB4 is found in a ternary complex with IGF1 and IGF1R. ITGA6:ITGB4 interacts with IGF2. Interacts with ADAM9. Interacts with RAB21. Interacts with MDK. ITGA6:ITGB1 interacts with MDK; this interaction mediates MDK-induced neurite outgrowth. Interacts with CD82; this interaction down-regulates ITGA6-mediated cell adhesion. Isoforms containing segment A, but not segment B, are the major targets for PMA-induced phosphorylation. Phosphorylation occurs on 'Ser-1064' of isoform alpha-6X1A. Phosphorylation is not required for the induction of integrin alpha-6A/beta-1 high affinity but may reduce the affinity for ligand. Post-translationally, undergoes PLAU-mediated cleavage at residues Arg-595-596-Arg in a time-dependent manner to produce processed integrin alpha-6 (alpha6p). In terms of processing, palmitoylation by DHHC3 enhances stability and cell surface expression. As to expression, expressed at low levels in normal skin tissue with elevated levels in skin tumors.

The protein localises to the cell membrane. Functionally, integrin alpha-6/beta-1 (ITGA6:ITGB1) is a receptor for laminin on platelets. Integrin alpha-6/beta-1 (ITGA6:ITGB1) is present in oocytes and is involved in sperm-egg fusion. Integrin alpha-6/beta-4 (ITGA6:ITGB4) is a receptor for laminin in epithelial cells and it plays a critical structural role in the hemidesmosome. ITGA6:ITGB4 binds to NRG1 (via EGF domain) and this binding is essential for NRG1-ERBB signaling. ITGA6:ITGB4 binds to IGF1 and this binding is essential for IGF1 signaling. ITGA6:ITGB4 binds to IGF2 and this binding is essential for IGF2 signaling. The sequence is that of Integrin alpha-6 (Itga6) from Mus musculus (Mouse).